The following is a 341-amino-acid chain: Biotin synthase (341 aa).

One can recognise a Radical SAM core domain in the interval 56 to 285 (ADIQRAALLS…KARVRLSAGR (230 aa)). The [4Fe-4S] cluster site is built by Cys-71, Cys-75, and Cys-78. [2Fe-2S] cluster-binding residues include Cys-116, Cys-148, Cys-208, and Arg-280.

It belongs to the radical SAM superfamily. Biotin synthase family. In terms of assembly, homodimer. Requires [4Fe-4S] cluster as cofactor. [2Fe-2S] cluster serves as cofactor.

The catalysed reaction is (4R,5S)-dethiobiotin + (sulfur carrier)-SH + 2 reduced [2Fe-2S]-[ferredoxin] + 2 S-adenosyl-L-methionine = (sulfur carrier)-H + biotin + 2 5'-deoxyadenosine + 2 L-methionine + 2 oxidized [2Fe-2S]-[ferredoxin]. The protein operates within cofactor biosynthesis; biotin biosynthesis; biotin from 7,8-diaminononanoate: step 2/2. Its function is as follows. Catalyzes the conversion of dethiobiotin (DTB) to biotin by the insertion of a sulfur atom into dethiobiotin via a radical-based mechanism. The protein is Biotin synthase of Methylorubrum populi (strain ATCC BAA-705 / NCIMB 13946 / BJ001) (Methylobacterium populi).